A 443-amino-acid chain; its full sequence is UPF0597 protein DVU_0440 (443 aa).

The protein belongs to the UPF0597 family.

This Nitratidesulfovibrio vulgaris (strain ATCC 29579 / DSM 644 / CCUG 34227 / NCIMB 8303 / VKM B-1760 / Hildenborough) (Desulfovibrio vulgaris) protein is UPF0597 protein DVU_0440.